The sequence spans 84 residues: MAQTQSPFQWLATKLIRGYQIFISPILGPKCRFQPTCSHYAIEAIQLHGVIKGSWFAAKRILKCHPLHPGGNDPVPPKKDRCNK.

It belongs to the UPF0161 family.

The protein localises to the cell inner membrane. Could be involved in insertion of integral membrane proteins into the membrane. The chain is Putative membrane protein insertion efficiency factor from Shewanella amazonensis (strain ATCC BAA-1098 / SB2B).